Consider the following 426-residue polypeptide: Tachykinins (426 aa).

Positions M1–E116 are excised as a propeptide. An Arginine amide modification is found at R127. Residues G131 to E145 constitute a propeptide that is removed on maturation. Position 156 is an arginine amide (R156). The propeptide occupies V160 to Y167. R178 bears the Arginine amide mark. A propeptide spanning residues S182 to E235 is cleaved from the precursor. R246 carries the arginine amide modification. The propeptide occupies S250–E259. At R270 the chain carries Arginine amide. Residues N274–D291 constitute a propeptide that is removed on maturation. The segment at Q299–D329 is disordered. Residue R302 is modified to Arginine amide. Positions D306–D308 are excised as a propeptide. R319 carries the arginine amide modification. Residues N323–E358 constitute a propeptide that is removed on maturation. 2 positions are modified to arginine amide: R369 and R386. Residues W390 to S426 constitute a propeptide that is removed on maturation.

This sequence belongs to the tachykinin family. In terms of tissue distribution, tachykinins (TK) are expressed throughout the nervous system. APMGFQGMR-amide is also expressed in the retrocerebral complex (at protein level).

The protein resides in the secreted. Tachykinins are active peptides which excite neurons, evoke behavioral responses, are potent vasodilators and secretagogues, and contract (directly or indirectly) many smooth muscles. In Camponotus floridanus (Florida carpenter ant), this protein is Tachykinins.